A 326-amino-acid polypeptide reads, in one-letter code: GTP cyclohydrolase MptA (326 aa).

The protein belongs to the GTP cyclohydrolase IV family. Homodimer. It depends on Fe(2+) as a cofactor.

It catalyses the reaction GTP + H2O = 7,8-dihydroneopterin 2',3'-cyclic phosphate + formate + diphosphate + H(+). It participates in cofactor biosynthesis; 5,6,7,8-tetrahydromethanopterin biosynthesis. Functionally, converts GTP to 7,8-dihydro-D-neopterin 2',3'-cyclic phosphate, the first intermediate in the biosynthesis of coenzyme methanopterin. In Methanoregula boonei (strain DSM 21154 / JCM 14090 / 6A8), this protein is GTP cyclohydrolase MptA.